We begin with the raw amino-acid sequence, 961 residues long: MAERGGAGGGPGGSGGGSSQRGSGVAQSPQQQPQQQPPQPQQPTPPKLAQATSSSSSTSAAAASSSSSSTSTSMAVAVASGSAPPGGPGPGRTPAPVQMNLYATWEVDRSSSSCVPRLFSLTLKKLVMLKEMDKDLNSVVIAVKLQGSKRILRSNEIILPASGLVETELQLTFSLQYPHFLKRDANKLQIMLQRRKRYKNRTILGYKTLAVGLINMAEVMQHPNEGALVLGLHSNVKDVSVPVAEIKIYSLSSQPIDHEGIKSKLSDRSPDIDNYSEEEEESFSSEQEGSDDPLHGQDLFYEDEDLRKVKKTRRKLTSTSAITRQPNIKQKFVALLKRFKVSDEVGFGLEHVSREQIREVEEDLDELYDSLEMYNPSDSGPEMEETESILSTPKPKLKPFFEGMSQSSSQTEIGSLNSKGSLGKDTTSPMELAALEKVKSTWIKNQDDSLTETDTLEITDQDMFGDVSTSLVVPEKVKTPMKSSKADLQGSASPSKVEGTHTPRQKRSTPLKERQLSKPLSERTNSSDSERSPDLGHSTQIPRKVVYDQLNQILVSDAALPENVILVNTTDWQGQYVAELLQDQRKPVVCTCSTVEVQAVLSALLTRIQRYCNCNSSMPRPVKVAAVGSQSYLSSILRFFVKSLASKTPDWLGYMRFLIIPLGSHPVAKYLGSVDSRYSSTFLDSAWRDLFSRSEPPVSEPLDVVGRVMQYVNGATTTHQLPVAEAMLTCRHKFPDEDSYQKFIPFIGVVKVGLVEDSPSTAGDGDDSPVVSLTVPSTSPPSSSGLSRDATATPPSSPSMSSALAIVGSPNSPYGDVIGLQVDYWLGHPGERRREGDKRDASSKNTLKSVFRSVQVSRLPHAGEAQLSGTMAMTVVTKEKNKKVPTIFLSKKPREKEVDSKSQVIEGISRLICSAKQQQTMLRVSIDGVEWSDIKFFQLAAQWPTHVKHFPVGLFSGSKTT.

Gly residues predominate over residues 1–19 (MAERGGAGGGPGGSGGGSS). Disordered stretches follow at residues 1–70 (MAER…SSST) and 76–95 (VAVA…RTPA). The residue at position 2 (A2) is an N-acetylalanine. Over residues 20–34 (QRGSGVAQSPQQQPQ) the composition is skewed to low complexity. S28 bears the Phosphoserine mark. Over residues 35 to 46 (QQPPQPQQPTPP) the composition is skewed to pro residues. T44 carries the phosphothreonine modification. Over residues 51–70 (ATSSSSSTSAAAASSSSSST) the composition is skewed to low complexity. Y249 carries the post-translational modification Phosphotyrosine. The span at 260-271 (GIKSKLSDRSPD) shows a compositional bias: basic and acidic residues. 2 disordered regions span residues 260–297 (GIKS…LHGQ) and 375–426 (NPSD…GKDT). Residues 274–291 (NYSEEEEESFSSEQEGSD) show a composition bias toward acidic residues. Residues 351–375 (HVSREQIREVEEDLDELYDSLEMYN) adopt a coiled-coil conformation. S377 and S379 each carry phosphoserine. Polar residues predominate over residues 404-426 (MSQSSSQTEIGSLNSKGSLGKDT). Phosphoserine is present on residues S428 and S493. Disordered stretches follow at residues 475-540 (EKVK…HSTQ) and 758-802 (SPST…SMSS). A Phosphothreonine modification is found at T502. S517, S526, S527, S529, and S532 each carry phosphoserine. The segment covering 768–802 (SPVVSLTVPSTSPPSSSGLSRDATATPPSSPSMSS) has biased composition (low complexity).

It belongs to the PACS family. In terms of assembly, associates with AP-1 and AP-3 but not with AP-2 complexes. Interacts with FURIN. Forms a ternary complex with FURIN and AP-1. Interacts with PKD2 (via acidic region). Interacts with SORL1. Interacts with WDR37.

It localises to the golgi apparatus. Its subcellular location is the trans-Golgi network. Functionally, coat protein that is involved in the localization of trans-Golgi network (TGN) membrane proteins that contain acidic cluster sorting motifs. Controls the endosome-to-Golgi trafficking of furin and mannose-6-phosphate receptor by connecting the acidic-cluster-containing cytoplasmic domain of these molecules with the adapter-protein complex-1 (AP-1) of endosomal clathrin-coated membrane pits. Required for normal ER Ca2+ handling in lymphocytes. Together with WDR37, it plays an essential role in lymphocyte development, quiescence and survival. Required for stabilizing peripheral lymphocyte populations. The sequence is that of Phosphofurin acidic cluster sorting protein 1 (Pacs1) from Mus musculus (Mouse).